The following is a 315-amino-acid chain: Zinc finger transcription factor ref-2 (315 aa).

The C2H2-type 1; atypical zinc-finger motif lies at 83–112 (VQCLWETNGQVCMHVCQNSGELSTHISSNH). The C2H2-type 2; degenerate zinc-finger motif lies at 124-146 (KGCDREFKMFKAKYKLVNHMRVH). 3 C2H2-type zinc fingers span residues 152 to 174 (FLCD…KRIH), 180 to 204 (FQCT…MHVH), and 210 to 234 (YSCM…TKVH). The tract at residues 225 to 270 (SSLRKHTKVHENEKKSQLSPEHDESSDSGNASIGTPTTDESLTFSP) is disordered. A compositionally biased stretch (basic and acidic residues) spans 233 to 249 (VHENEKKSQLSPEHDES). Residues 251–270 (DSGNASIGTPTTDESLTFSP) are compositionally biased toward polar residues.

In terms of assembly, interacts with TCF transcription factor pop-1; the interaction is direct and facilitates transcriptional activation; transcription may be repressed by beta-catenin/sys-1.

The protein resides in the nucleus. It is found in the cytoplasm. Its function is as follows. Transcription factor. Modulates expression of target genes by binding to regulatory elements. Required for normal cell division timing and cell positioning in anterior lineages, acting in a cell-autonomous manner. Required for development, fusion and fate of cells of the ventral epidermis, the Pn.p cells, during larval development; acts in concert with homeobox genes lin-39 and mab-5. Required for the specification of the AIY interneuron. In complex with TCF transcription factor pop-1, positively modulates expression of LIM/homeobox protein ttx-3 in anterior daughter cells of the SMDD/AIY neuron lineage. The protein is Zinc finger transcription factor ref-2 of Caenorhabditis elegans.